A 172-amino-acid chain; its full sequence is MQILEPQQFATWNEPIEMLYACHSKVKRFCRQLSILPDYLEKHGYTQAVLNDVEQILSYFNRAAPLHHDDEELDFFPQLVKVAPQTQTSIDELEKQHEYLHENWNALSVQLEELISEQRQDIDKHLIERFIQGYDRHIALEEPLFEMGRECLSADILTEMGKHMSARRQVKE.

This is an uncharacterized protein from Haemophilus influenzae (strain ATCC 51907 / DSM 11121 / KW20 / Rd).